A 181-amino-acid polypeptide reads, in one-letter code: Oligoribonuclease (181 aa).

One can recognise an Exonuclease domain in the interval 8-171 (LIWIDLEMTG…DDIRESVGEL (164 aa)). Residue Tyr129 is part of the active site.

This sequence belongs to the oligoribonuclease family.

It localises to the cytoplasm. In terms of biological role, 3'-to-5' exoribonuclease specific for small oligoribonucleotides. This Serratia proteamaculans (strain 568) protein is Oligoribonuclease.